The sequence spans 61 residues: Ferredoxin (61 aa).

In terms of domain architecture, 4Fe-4S ferredoxin-type spans 2–28; sequence LYITEECTYCGACEPECPTNAISAGSE. Residues C8, C11, C14, C18, C37, C40, C49, and C53 each contribute to the [4Fe-4S] cluster site.

[4Fe-4S] cluster is required as a cofactor.

Its function is as follows. Ferredoxins are iron-sulfur proteins that transfer electrons in a wide variety of metabolic reactions. This chain is Ferredoxin, found in Chlorobaculum thiosulfatiphilum (Chlorobium limicola f.sp. thiosulfatophilum).